We begin with the raw amino-acid sequence, 130 residues long: Anti-adapter protein IraD (130 aa).

Belongs to the GpW/Gp25 family. IraD subfamily. As to quaternary structure, interacts with RssB.

It localises to the cytoplasm. Inhibits RpoS proteolysis by regulating RssB activity, thereby increasing the stability of the sigma stress factor RpoS during oxidative stress. Its effect on RpoS stability is due to its interaction with RssB, which probably blocks the interaction of RssB with RpoS, and the consequent delivery of the RssB-RpoS complex to the ClpXP protein degradation pathway. The chain is Anti-adapter protein IraD from Escherichia coli O45:K1 (strain S88 / ExPEC).